A 204-amino-acid chain; its full sequence is N-alpha-acetyltransferase 40 (204 aa).

The N-acetyltransferase domain occupies 39–202 (EIYHHLEKGL…YYILYTKSRK (164 aa)). Substrate-binding positions include tyrosine 64, 107 to 109 (TVE), and tyrosine 118. Residues 120–122 (IQL) and 128–133 (GRNVGK) contribute to the acetyl-CoA site. Residue threonine 154 participates in substrate binding. Asparagine 159 is an acetyl-CoA binding site. Substrate is bound at residue serine 176.

Belongs to the acetyltransferase family. NAA40 subfamily.

The protein localises to the cytoplasm. It localises to the nucleus. The catalysed reaction is N-terminal L-seryl-[histone H4] + acetyl-CoA = N-terminal N(alpha)-acetyl-L-seryl-[histone H4] + CoA + H(+). It carries out the reaction N-terminal L-seryl-[histone H2A] + acetyl-CoA = N-terminal N(alpha)-acetyl-L-seryl-[histone H2A] + CoA + H(+). N-alpha-acetyltransferase that specifically mediates the acetylation of the N-terminal residues of histones H4 and H2A. The polypeptide is N-alpha-acetyltransferase 40 (Schizosaccharomyces pombe (strain 972 / ATCC 24843) (Fission yeast)).